The sequence spans 416 residues: Histidine--tRNA ligase (416 aa).

This sequence belongs to the class-II aminoacyl-tRNA synthetase family.

It is found in the cytoplasm. The catalysed reaction is tRNA(His) + L-histidine + ATP = L-histidyl-tRNA(His) + AMP + diphosphate + H(+). This chain is Histidine--tRNA ligase, found in Methanococcus maripaludis (strain DSM 14266 / JCM 13030 / NBRC 101832 / S2 / LL).